We begin with the raw amino-acid sequence, 31 residues long: Photosystem I reaction center subunit XII (31 aa).

Residues 7–26 form a helical membrane-spanning segment; the sequence is QISIILLIALIPAFFSLKLG.

This sequence belongs to the PsaM family.

It is found in the plastid. Its subcellular location is the chloroplast thylakoid membrane. The polypeptide is Photosystem I reaction center subunit XII (Euglena myxocylindracea).